The primary structure comprises 356 residues: Guanine nucleotide-binding protein alpha-2 subunit (356 aa).

Positions 1–25 (MGLCQSEEEKVGSQKSRAIDKEIKQ) are disordered. The N-myristoyl glycine moiety is linked to residue glycine 2. Cysteine 4 carries the S-palmitoyl cysteine lipid modification. Positions 7–25 (EEEKVGSQKSRAIDKEIKQ) are enriched in basic and acidic residues. Positions 14-338 (QKSRAIDKEI…TDTNQVQKIL (325 aa)) constitute a G-alpha domain. Residues 17-30 (RAIDKEIKQNQSND) form a G1 motif region. Residues glutamine 25, glutamine 27, serine 28, asparagine 29, aspartate 30, valine 135, glutamate 160, alanine 166, valine 188, glutamate 254, serine 255, cysteine 257, and phenylalanine 310 each contribute to the GTP site. Asparagine 29 serves as a coordination point for Mg(2+). Positions 158 to 166 (FFENLDRIA) are G2 motif. Residue alanine 166 coordinates Mg(2+). Residues 181–190 (RTKTTGIVEV) form a G3 motif region. The segment at 250–257 (MRLFESIC) is G4 motif. Residues 308–313 (QKFEAL) form a G5 motif region.

This sequence belongs to the G-alpha family. G(q) subfamily. G proteins are composed of 3 units; alpha, beta and gamma. The alpha chain contains the guanine nucleotide binding site. It depends on Mg(2+) as a cofactor.

In terms of biological role, guanine nucleotide-binding proteins (G proteins) are involved as modulators or transducers in various transmembrane signaling systems. Involved in behavioral responses to P.aeruginosa by controlling the expression of daf-7, a member of the TGF-beta family, in ASJ sensory neurons. The sequence is that of Guanine nucleotide-binding protein alpha-2 subunit (gpa-2) from Caenorhabditis briggsae.